The primary structure comprises 160 residues: Serine-protein kinase RsbW (160 aa).

It belongs to the anti-sigma-factor family.

The enzyme catalyses L-seryl-[protein] + ATP = O-phospho-L-seryl-[protein] + ADP + H(+). The catalysed reaction is L-threonyl-[protein] + ATP = O-phospho-L-threonyl-[protein] + ADP + H(+). In terms of biological role, negative regulator of sigma-B activity. Phosphorylates and inactivates its specific antagonist protein, RsbV. Upon phosphorylation of RsbV, RsbW is released and binds to sigma-B, thereby blocking its ability to form an RNA polymerase holoenzyme (E-sigma-B). The protein is Serine-protein kinase RsbW of Bacillus cereus (strain G9842).